The chain runs to 78 residues: Acyl carrier protein (78 aa).

The 76-residue stretch at 2-77 (SDTVERVKKI…DAVKFIDKAS (76 aa)) folds into the Carrier domain. Ser-37 carries the O-(pantetheine 4'-phosphoryl)serine modification.

This sequence belongs to the acyl carrier protein (ACP) family. Post-translationally, 4'-phosphopantetheine is transferred from CoA to a specific serine of apo-ACP by AcpS. This modification is essential for activity because fatty acids are bound in thioester linkage to the sulfhydryl of the prosthetic group.

Its subcellular location is the cytoplasm. It functions in the pathway lipid metabolism; fatty acid biosynthesis. Functionally, carrier of the growing fatty acid chain in fatty acid biosynthesis. This chain is Acyl carrier protein, found in Bartonella henselae (strain ATCC 49882 / DSM 28221 / CCUG 30454 / Houston 1) (Rochalimaea henselae).